A 314-amino-acid polypeptide reads, in one-letter code: Lysophospholipase D GDPD1 (314 aa).

Over 1 to 3 (MSS) the chain is Extracellular. A helical membrane pass occupies residues 4-24 (TAAFYLLSTLGGYLVTSFLLL). Over 25-195 (KYPTLLHQRK…VEKCYKENSD (171 aa)) the chain is Cytoplasmic. The GP-PDE domain occupies 40-309 (SKHISHRGGA…DYPTKLRDFL (270 aa)). 3 residues coordinate a divalent metal cation: E72, D74, and H87. A helical membrane pass occupies residues 196-216 (IPILFSLQRVLLILGLFFTGL). At 217–314 (LPFVPIREQF…LRDFLHNFSA (98 aa)) the chain is on the extracellular side.

This sequence belongs to the glycerophosphoryl diester phosphodiesterase family. In terms of tissue distribution, widely expressed with high expression level in testis.

The protein localises to the cytoplasm. It is found in the membrane. The protein resides in the perinuclear region. Its subcellular location is the endoplasmic reticulum. It catalyses the reaction a 1-O-alkyl-sn-glycero-3-phosphocholine + H2O = a 1-O-alkyl-sn-glycero-3-phosphate + choline + H(+). It carries out the reaction 1-hexadecanoyl-sn-glycero-3-phosphocholine + H2O = 1-hexadecanoyl-sn-glycero-3-phosphate + choline + H(+). The enzyme catalyses N-hexadecanoyl-sn-glycero-3-phosphoethanolamine + H2O = N-hexadecanoylethanolamine + sn-glycerol 3-phosphate + H(+). The catalysed reaction is N-(5Z,8Z,11Z,14Z-eicosatetraenoyl)-1-(9Z-octadecenoyl)-sn-glycero-3-phosphoethanolamine + H2O = N-(5Z,8Z,11Z,14Z-eicosatetraenoyl)-ethanolamine + 1-(9Z-octadecenoyl)-sn-glycero-3-phosphate + H(+). It catalyses the reaction N,1-di-(9Z-octadecenoyl)-sn-glycero-3-phosphoethanolamine + H2O = N-(9Z-octadecenoyl) ethanolamine + 1-(9Z-octadecenoyl)-sn-glycero-3-phosphate + H(+). It carries out the reaction N-hexadecanoyl-1-(9Z-octadecenoyl)-sn-glycero-3-phosphoethanolamine + H2O = N-hexadecanoylethanolamine + 1-(9Z-octadecenoyl)-sn-glycero-3-phosphate + H(+). The enzyme catalyses 1-O-(1Z-octadecenyl)-sn-glycero-3-phospho-N-hexadecanoyl-ethanolamine + H2O = 1-O-(1Z-octadecenyl)-sn-glycero-3-phosphate + N-hexadecanoylethanolamine + H(+). The catalysed reaction is 1-hexadecanoyl-sn-glycero-3-phosphoethanolamine + H2O = 1-hexadecanoyl-sn-glycero-3-phosphate + ethanolamine + H(+). It catalyses the reaction 1-O-hexadecyl-sn-glycero-3-phosphocholine + H2O = 1-O-hexadecyl-sn-glycero-3-phosphate + choline + H(+). It carries out the reaction 1-(9Z-octadecenoyl)-sn-glycero-3-phosphocholine + H2O = 1-(9Z-octadecenoyl)-sn-glycero-3-phosphate + choline + H(+). The enzyme catalyses N,1-dihexadecanoyl-sn-glycero-3-phosphoethanolamine + H2O = N-hexadecanoylethanolamine + 1-hexadecanoyl-sn-glycero-3-phosphate + H(+). The catalysed reaction is 1-O-(1Z-octadecenyl)-sn-glycero-3-phospho-(N-5Z,8Z,11Z,14Z-eicosatetraenoyl)-ethanolamine + H2O = 1-O-(1Z-octadecenyl)-sn-glycero-3-phosphate + N-(5Z,8Z,11Z,14Z-eicosatetraenoyl)-ethanolamine + H(+). It catalyses the reaction 1-O-(1Z-octadecenyl)-sn-glycero-3-phospho-(N-9Z-octadecenoyl)-ethanolamine + H2O = 1-O-(1Z-octadecenyl)-sn-glycero-3-phosphate + N-(9Z-octadecenoyl) ethanolamine + H(+). Its activity is regulated as follows. Lysophospholipase D activity is increased by magnesium and manganese and inhibited by calcium in a concentration dependent manner. Loss of lysophospholipase D activity by addition of EDTA. Hydrolyzes lysoglycerophospholipids to produce lysophosphatidic acid (LPA) and the corresponding amines. Shows a preference for 1-O-alkyl-sn-glycero-3-phosphocholine (lyso-PAF), lysophosphatidylethanolamine (lyso-PE) and lysophosphatidylcholine (lyso-PC). May be involved in bioactive N-acylethanolamine biosynthesis from both N-acyl-lysoplasmenylethanolamin (N-acyl-lysoPlsEt) and N-acyl-lysophosphatidylethanolamin (N-acyl-lysoPE). In addition, hydrolyzes glycerophospho-N-acylethanolamine to N-acylethanolamine. Does not display glycerophosphodiester phosphodiesterase activity, since it cannot hydrolyze either glycerophosphoinositol or glycerophosphocholine. The chain is Lysophospholipase D GDPD1 from Homo sapiens (Human).